We begin with the raw amino-acid sequence, 241 residues long: GTP cyclohydrolase 1 type 2 homolog (241 aa).

Residues His-62, His-63, Asp-101, His-207, and Glu-211 each coordinate a divalent metal cation.

This sequence belongs to the GTP cyclohydrolase I type 2/NIF3 family. In terms of assembly, homohexamer.

This is GTP cyclohydrolase 1 type 2 homolog from Campylobacter jejuni subsp. jejuni serotype O:2 (strain ATCC 700819 / NCTC 11168).